Here is a 161-residue protein sequence, read N- to C-terminus: Transcription antitermination protein NusB (161 aa).

The disordered stretch occupies residues 1-22 (MNLSDFKPGEGTEVPEEEKSVS).

It belongs to the NusB family.

Involved in transcription antitermination. Required for transcription of ribosomal RNA (rRNA) genes. Binds specifically to the boxA antiterminator sequence of the ribosomal RNA (rrn) operons. This is Transcription antitermination protein NusB from Hydrogenovibrio crunogenus (strain DSM 25203 / XCL-2) (Thiomicrospira crunogena).